The chain runs to 478 residues: 3-isopropylmalate dehydratase large subunit (478 aa).

[4Fe-4S] cluster-binding residues include Cys359, Cys420, and Cys423.

It belongs to the aconitase/IPM isomerase family. LeuC type 1 subfamily. As to quaternary structure, heterodimer of LeuC and LeuD. [4Fe-4S] cluster serves as cofactor.

The enzyme catalyses (2R,3S)-3-isopropylmalate = (2S)-2-isopropylmalate. It participates in amino-acid biosynthesis; L-leucine biosynthesis; L-leucine from 3-methyl-2-oxobutanoate: step 2/4. Its function is as follows. Catalyzes the isomerization between 2-isopropylmalate and 3-isopropylmalate, via the formation of 2-isopropylmaleate. The polypeptide is 3-isopropylmalate dehydratase large subunit (Psychrobacter sp. (strain PRwf-1)).